The primary structure comprises 299 residues: 5-azacytidine resistance protein azr1 (299 aa).

The PPM-type phosphatase domain occupies 35-293 (KSHFPSPATL…DDTTITCLLI (259 aa)).

Functionally, confers azacytidine resistance in high copy. This Schizosaccharomyces pombe (strain 972 / ATCC 24843) (Fission yeast) protein is 5-azacytidine resistance protein azr1 (azr1).